A 331-amino-acid polypeptide reads, in one-letter code: Protein RecA (331 aa).

Residue 66 to 73 (GPESSGKT) coordinates ATP.

This sequence belongs to the RecA family.

It localises to the cytoplasm. Can catalyze the hydrolysis of ATP in the presence of single-stranded DNA, the ATP-dependent uptake of single-stranded DNA by duplex DNA, and the ATP-dependent hybridization of homologous single-stranded DNAs. It interacts with LexA causing its activation and leading to its autocatalytic cleavage. The chain is Protein RecA from Acholeplasma laidlawii (strain PG-8A).